Here is a 157-residue protein sequence, read N- to C-terminus: Protein Smg homolog (157 aa).

This sequence belongs to the Smg family.

In Aliivibrio fischeri (strain MJ11) (Vibrio fischeri), this protein is Protein Smg homolog.